We begin with the raw amino-acid sequence, 168 residues long: ATP synthase subunit b (168 aa).

The chain crosses the membrane as a helical span at residues 9–29; it reads SIPFGTIAYTLFIFLLLLVML.

Belongs to the ATPase B chain family. F-type ATPases have 2 components, F(1) - the catalytic core - and F(0) - the membrane proton channel. F(1) has five subunits: alpha(3), beta(3), gamma(1), delta(1), epsilon(1). F(0) has three main subunits: a(1), b(2) and c(10-14). The alpha and beta chains form an alternating ring which encloses part of the gamma chain. F(1) is attached to F(0) by a central stalk formed by the gamma and epsilon chains, while a peripheral stalk is formed by the delta and b chains.

The protein resides in the cell membrane. In terms of biological role, f(1)F(0) ATP synthase produces ATP from ADP in the presence of a proton or sodium gradient. F-type ATPases consist of two structural domains, F(1) containing the extramembraneous catalytic core and F(0) containing the membrane proton channel, linked together by a central stalk and a peripheral stalk. During catalysis, ATP synthesis in the catalytic domain of F(1) is coupled via a rotary mechanism of the central stalk subunits to proton translocation. Functionally, component of the F(0) channel, it forms part of the peripheral stalk, linking F(1) to F(0). This is ATP synthase subunit b from Bacillus mycoides (strain KBAB4) (Bacillus weihenstephanensis).